Reading from the N-terminus, the 88-residue chain is Phosphocarrier protein HPr (88 aa).

An HPr domain is found at 1–88 (MEQASFVVID…EVLKKEGLAE (88 aa)). H15 acts as the Pros-phosphohistidine intermediate in catalysis. S46 is subject to Phosphoserine; by HPrK/P.

Belongs to the HPr family.

Its subcellular location is the cytoplasm. Phosphorylation on Ser-46 inhibits the phosphoryl transfer from enzyme I to HPr. General (non sugar-specific) component of the phosphoenolpyruvate-dependent sugar phosphotransferase system (sugar PTS). This major carbohydrate active-transport system catalyzes the phosphorylation of incoming sugar substrates concomitantly with their translocation across the cell membrane. The phosphoryl group from phosphoenolpyruvate (PEP) is transferred to the phosphoryl carrier protein HPr by enzyme I. Phospho-HPr then transfers it to the PTS EIIA domain. Functionally, P-Ser-HPr interacts with the catabolite control protein A (CcpA), forming a complex that binds to DNA at the catabolite response elements cre, operator sites preceding a large number of catabolite-regulated genes. Thus, P-Ser-HPr is a corepressor in carbon catabolite repression (CCR), a mechanism that allows bacteria to coordinate and optimize the utilization of available carbon sources. P-Ser-HPr also plays a role in inducer exclusion, in which it probably interacts with several non-PTS permeases and inhibits their transport activity. This Listeria monocytogenes serovar 1/2a (strain ATCC BAA-679 / EGD-e) protein is Phosphocarrier protein HPr (ptsH).